The sequence spans 772 residues: Tubulin monoglycylase TTLL3 (772 aa).

Positions 50 to 81 (PTLLPPQKDLDSSAMGDSDTTEDEDEDEDEEF) are disordered. Acidic residues predominate over residues 68 to 81 (DTTEDEDEDEDEEF). Residues 151 to 510 (ARNVLKLVVK…RMLDRNCDTG (360 aa)) form the TTL domain. Residues K283, 289 to 290 (RG), 321 to 324 (QKYI), 334 to 336 (KFD), and 378 to 379 (CN) contribute to the ATP site. Position 289 (R289) interacts with a protein. S381 is a binding site for L-glutamate. Residues D456, E469, and N471 each coordinate Mg(2+). Position 469 (E469) interacts with ATP.

Requires Mg(2+) as cofactor. In terms of tissue distribution, expressed in brain, heart, kidney, testis, liver, lung, muscle, spleen, trachea and colon.

The protein resides in the cytoplasm. It is found in the cytoskeleton. It localises to the cell projection. The protein localises to the cilium. Its subcellular location is the cilium axoneme. The protein resides in the flagellum axoneme. The catalysed reaction is L-glutamyl-[protein] + glycine + ATP = glycyl-L-glutamyl-[protein] + ADP + phosphate + H(+). Its function is as follows. Monoglycylase which modifies alpha- and beta-tubulin, adding a single glycine on the gamma-carboxyl groups of specific glutamate residues to generate monoglycine side chains within the C-terminal tail of tubulin. Not involved in elongation step of the polyglycylation reaction. Preferentially glycylates a beta-tail peptide over the alpha-tail, although shifts its preference toward alpha-tail as beta-tail glutamylation increases. Competes with polyglutamylases for modification site on beta-tubulin substrate, thereby creating an anticorrelation between glycylation and glutamylation reactions. Together with TTLL8, mediates microtubule glycylation of primary and motile cilia, which is essential for their stability and maintenance. Involved in microtubule glycylation of primary cilia in colon which controls cell proliferation of epithelial cells and plays an essential role in colon cancer development. Together with TTLL8, glycylates sperm flagella which regulates axonemal dynein motor activity, thereby controlling flagellar beat, directional sperm swimming and male fertility. The polypeptide is Tubulin monoglycylase TTLL3 (Homo sapiens (Human)).